A 33-amino-acid polypeptide reads, in one-letter code: Photosystem II reaction center protein T (33 aa).

A helical membrane pass occupies residues 3–23 (ALVYTFLLVSTLGIIFFAIFF).

The protein belongs to the PsbT family. As to quaternary structure, PSII is composed of 1 copy each of membrane proteins PsbA, PsbB, PsbC, PsbD, PsbE, PsbF, PsbH, PsbI, PsbJ, PsbK, PsbL, PsbM, PsbT, PsbY, PsbZ, Psb30/Ycf12, at least 3 peripheral proteins of the oxygen-evolving complex and a large number of cofactors. It forms dimeric complexes.

It localises to the plastid. The protein resides in the chloroplast thylakoid membrane. Found at the monomer-monomer interface of the photosystem II (PS II) dimer, plays a role in assembly and dimerization of PSII. PSII is a light-driven water plastoquinone oxidoreductase, using light energy to abstract electrons from H(2)O, generating a proton gradient subsequently used for ATP formation. This chain is Photosystem II reaction center protein T, found in Arabidopsis thaliana (Mouse-ear cress).